The primary structure comprises 287 residues: MADVIDAVFDAIADAAPEVRAGLPDHRATRDDQNASGDTQLEADVWADDLLFDRTESIEGVNWYASEERDAVVTVGDAEGGYAVALDPLDGSSNVKSNNPCGTVVGIYDQPLPAPGSSLVAAGFVLYGPTTTMVVARDDTVRESLVSETGATTDLGPVELPADPTVYGFGGRVPDWTPAFESFVRDVEDDLKLRYGGAMIADVNQVLVYGGVFGYPGMESAPDGKLRAQFEALPIAYIVETAGGASSDGTQSLLDVAPTRLHERTPTFVGTDDVIAALDAALPDHTN.

Positions 67, 87, 89, and 90 each coordinate Mg(2+). Substrate-binding positions include 90–93, Tyr-195, and Lys-225; that span reads DGSS. Glu-231 is a binding site for Mg(2+).

Belongs to the FBPase class 1 family. In terms of assembly, homotetramer. Mg(2+) is required as a cofactor.

The protein localises to the cytoplasm. The enzyme catalyses beta-D-fructose 1,6-bisphosphate + H2O = beta-D-fructose 6-phosphate + phosphate. The protein operates within carbohydrate biosynthesis; gluconeogenesis. The sequence is that of Fructose-1,6-bisphosphatase class 1 from Halobacterium salinarum (strain ATCC 29341 / DSM 671 / R1).